The chain runs to 269 residues: MKLNRAIGVIDSGVGGLTVAKELIRQLPKERIIYLGDTARCPYGPRSREEVRQFTWEMTEHLLDLNIKMLVIACNTATAVVLEEMQKQLPIPVVGVIHPGSRTALKMTNTYHVGIIGTIGTVKSGAYEEALKSINNRVMVESLACPPFVELVESGNFESEMAYEVVRETLQPLKNTDIDTLILGCTHYPILGPVIKQVMGDKVQLISSGDETAREVSTILYHSKMLNEGEEQSDHLFLTTGKIGLFKEIASKWFGQPIENVKHIYLEKE.

Residues Asp-11–Ser-12 and Tyr-43–Gly-44 contribute to the substrate site. Residue Cys-74 is the Proton donor/acceptor of the active site. Asn-75–Thr-76 contacts substrate. Residue Cys-185 is the Proton donor/acceptor of the active site. Thr-186 to His-187 is a substrate binding site.

This sequence belongs to the aspartate/glutamate racemases family.

The enzyme catalyses L-glutamate = D-glutamate. Its pathway is cell wall biogenesis; peptidoglycan biosynthesis. In terms of biological role, provides the (R)-glutamate required for cell wall biosynthesis. The polypeptide is Glutamate racemase (Bacillus cereus (strain ATCC 10987 / NRS 248)).